The primary structure comprises 423 residues: Probable efflux pump mfs2 (423 aa).

The next 11 membrane-spanning stretches (helical) occupy residues 21-41 (TMAL…IGPV), 49-69 (SIFH…GFAH), 79-99 (LLAG…LGDV), 111-131 (LYLL…GFIV), 138-158 (WMFW…LLFH), 220-240 (AILE…FSAL), 256-278 (YIVI…DYAY), 295-315 (IPLL…YGWA), 319-339 (HLIW…MQIF), 360-380 (AATQ…SNSL), and 392-411 (LLAF…LWRW).

The protein belongs to the major facilitator superfamily.

It is found in the membrane. Functionally, probable efflux pump; part of the gene cluster 27 that mediates the biosynthesis of asparasone A, a sclerotium-specific anthraquinone pigment important for sclerotial survival. The sequence is that of Probable efflux pump mfs2 from Aspergillus flavus (strain ATCC 200026 / FGSC A1120 / IAM 13836 / NRRL 3357 / JCM 12722 / SRRC 167).